Reading from the N-terminus, the 317-residue chain is 4-diphosphocytidyl-2-C-methyl-D-erythritol kinase (317 aa).

Lys-17 is a catalytic residue. Residue 109 to 119 (PVAGGMGGGSA) coordinates ATP. Asp-151 is a catalytic residue.

It belongs to the GHMP kinase family. IspE subfamily.

It carries out the reaction 4-CDP-2-C-methyl-D-erythritol + ATP = 4-CDP-2-C-methyl-D-erythritol 2-phosphate + ADP + H(+). The protein operates within isoprenoid biosynthesis; isopentenyl diphosphate biosynthesis via DXP pathway; isopentenyl diphosphate from 1-deoxy-D-xylulose 5-phosphate: step 3/6. Functionally, catalyzes the phosphorylation of the position 2 hydroxy group of 4-diphosphocytidyl-2C-methyl-D-erythritol. This is 4-diphosphocytidyl-2-C-methyl-D-erythritol kinase from Paenarthrobacter aurescens (strain TC1).